The following is a 252-amino-acid chain: ATP synthase subunit a (252 aa).

5 helical membrane passes run 33-53, 92-112, 130-150, 196-216, and 217-237; these read GQVFITTWFVMALLIAVAFVA, VPFVGTLFLFIFVCNWSGALV, DINTTVALALLVSLAYFYAGL, LVVSVLVLLVPLFVPLPVMVL, and GLFTSAIQALVFATLAATYIG.

This sequence belongs to the ATPase A chain family. As to quaternary structure, F-type ATPases have 2 components, CF(1) - the catalytic core - and CF(0) - the membrane proton channel. CF(1) has five subunits: alpha(3), beta(3), gamma(1), delta(1), epsilon(1). CF(0) has four main subunits: a, b, b' and c.

It is found in the cellular thylakoid membrane. Functionally, key component of the proton channel; it plays a direct role in the translocation of protons across the membrane. This chain is ATP synthase subunit a, found in Thermosynechococcus vestitus (strain NIES-2133 / IAM M-273 / BP-1).